Here is a 284-residue protein sequence, read N- to C-terminus: Bifunctional protein FolD (284 aa).

NADP(+) contacts are provided by residues 166 to 168 (GAS) and Ile-232.

This sequence belongs to the tetrahydrofolate dehydrogenase/cyclohydrolase family. As to quaternary structure, homodimer.

It carries out the reaction (6R)-5,10-methylene-5,6,7,8-tetrahydrofolate + NADP(+) = (6R)-5,10-methenyltetrahydrofolate + NADPH. The enzyme catalyses (6R)-5,10-methenyltetrahydrofolate + H2O = (6R)-10-formyltetrahydrofolate + H(+). It functions in the pathway one-carbon metabolism; tetrahydrofolate interconversion. Catalyzes the oxidation of 5,10-methylenetetrahydrofolate to 5,10-methenyltetrahydrofolate and then the hydrolysis of 5,10-methenyltetrahydrofolate to 10-formyltetrahydrofolate. In Shewanella amazonensis (strain ATCC BAA-1098 / SB2B), this protein is Bifunctional protein FolD.